The following is a 305-amino-acid chain: tRNA dimethylallyltransferase (305 aa).

15–22 (GPTASGKS) lines the ATP pocket. Residue 17 to 22 (TASGKS) participates in substrate binding. 2 interaction with substrate tRNA regions span residues 40 to 43 (DSMQ) and 164 to 168 (QRIVR).

The protein belongs to the IPP transferase family. In terms of assembly, monomer. Requires Mg(2+) as cofactor.

The enzyme catalyses adenosine(37) in tRNA + dimethylallyl diphosphate = N(6)-dimethylallyladenosine(37) in tRNA + diphosphate. Catalyzes the transfer of a dimethylallyl group onto the adenine at position 37 in tRNAs that read codons beginning with uridine, leading to the formation of N6-(dimethylallyl)adenosine (i(6)A). This Sinorhizobium medicae (strain WSM419) (Ensifer medicae) protein is tRNA dimethylallyltransferase.